A 629-amino-acid chain; its full sequence is MALWGGRFSQAADARFKSFNDSLRFDYRLAEQDITGSVAWSKALVSVGILTQDEQLTIEAALNDLKLAVLENPEQILQSDAEDIHSWVETQLIAKVGDLGKKLHTGRSRNDQVATDLKLWCKQQGQQLLMQLDKTQQQLVSLAREHQHTVLPGYTHLQRAQPVTFSHWCLAYVEMLERDFSRLTDCLKRLDTCPLGSGALAGTAYPMDRTELAHSLGFGSATLNSLDSVSDRDHVMELMCTASMSMIHLSRLAEDLIFYNSGESNFIELADAVTSGSSLMPQKKNPDALELIRGKTGRVFGSLSAMLMTLKALPLAYNKDMQEDKEGLFDALDTWSDCLEMAAMSLVGMKINEARTKEAALGGYSNATELADYLVAKGVPFRDSHHIVGEAVVAAIAKGVPLEALTLAEFKAFDVLIEDDVYHHLSLDETLAKRKALGGVSPVQVEFALTNAEKRLEERDTSGISIRAARLTDLDDIERMVNYWANIGENLPRSRSDLVKAVGTFAVTEKHNQVTGCASIYVYDTGLAELRSLGIEPGYQGGGQGKAVVEYMLRKAEQMAIQKVFVLTRVPEFFMKLGFRSTSKSMLPEKVLKDCDMCPRQHACDEVALEFKLNVVGQTINLKAEKLAS.

The segment at methionine 1–valine 499 is argininosuccinate lyase. Residues isoleucine 464 to cysteine 598 form the N-acetyltransferase domain. An amino-acid acetyltransferase region spans residues lysine 500–serine 629.

In the N-terminal section; belongs to the lyase 1 family. Argininosuccinate lyase subfamily. The protein in the C-terminal section; belongs to the acetyltransferase family. ArgA subfamily.

It is found in the cytoplasm. The catalysed reaction is 2-(N(omega)-L-arginino)succinate = fumarate + L-arginine. It catalyses the reaction L-glutamate + acetyl-CoA = N-acetyl-L-glutamate + CoA + H(+). The protein operates within amino-acid biosynthesis; L-arginine biosynthesis; N(2)-acetyl-L-ornithine from L-glutamate: step 1/4. Its pathway is amino-acid biosynthesis; L-arginine biosynthesis; L-arginine from L-ornithine and carbamoyl phosphate: step 3/3. The sequence is that of Bifunctional protein ArgHA (argHA) from Moritella abyssi.